We begin with the raw amino-acid sequence, 463 residues long: uncharacterized protein (463 aa).

This is an uncharacterized protein from Lepidoptera (butterflies and moths).